The chain runs to 683 residues: DNA-directed RNA polymerase subunit beta' (683 aa).

Zn(2+) contacts are provided by Cys69, Cys71, Cys87, and Cys90. Mg(2+) is bound by residues Asp489, Asp491, and Asp493.

This sequence belongs to the RNA polymerase beta' chain family. RpoC1 subfamily. As to quaternary structure, in plastids the minimal PEP RNA polymerase catalytic core is composed of four subunits: alpha, beta, beta', and beta''. When a (nuclear-encoded) sigma factor is associated with the core the holoenzyme is formed, which can initiate transcription. It depends on Mg(2+) as a cofactor. The cofactor is Zn(2+).

It is found in the plastid. The protein localises to the chloroplast. The catalysed reaction is RNA(n) + a ribonucleoside 5'-triphosphate = RNA(n+1) + diphosphate. Its function is as follows. DNA-dependent RNA polymerase catalyzes the transcription of DNA into RNA using the four ribonucleoside triphosphates as substrates. The chain is DNA-directed RNA polymerase subunit beta' from Zea mays (Maize).